The chain runs to 237 residues: Pyridoxine 5'-phosphate synthase (237 aa).

Positions 7 and 18 each coordinate 3-amino-2-oxopropyl phosphate. Histidine 43 functions as the Proton acceptor in the catalytic mechanism. Arginine 45 and histidine 50 together coordinate 1-deoxy-D-xylulose 5-phosphate. The active-site Proton acceptor is the glutamate 70. Threonine 100 provides a ligand contact to 1-deoxy-D-xylulose 5-phosphate. Histidine 190 acts as the Proton donor in catalysis. 3-amino-2-oxopropyl phosphate contacts are provided by residues aspartate 191 and 213–214; that span reads GH.

Belongs to the PNP synthase family. In terms of assembly, homooctamer; tetramer of dimers.

Its subcellular location is the cytoplasm. The catalysed reaction is 3-amino-2-oxopropyl phosphate + 1-deoxy-D-xylulose 5-phosphate = pyridoxine 5'-phosphate + phosphate + 2 H2O + H(+). Its pathway is cofactor biosynthesis; pyridoxine 5'-phosphate biosynthesis; pyridoxine 5'-phosphate from D-erythrose 4-phosphate: step 5/5. Functionally, catalyzes the complicated ring closure reaction between the two acyclic compounds 1-deoxy-D-xylulose-5-phosphate (DXP) and 3-amino-2-oxopropyl phosphate (1-amino-acetone-3-phosphate or AAP) to form pyridoxine 5'-phosphate (PNP) and inorganic phosphate. The polypeptide is Pyridoxine 5'-phosphate synthase (Christiangramia forsetii (strain DSM 17595 / CGMCC 1.15422 / KT0803) (Gramella forsetii)).